We begin with the raw amino-acid sequence, 3459 residues long: uncharacterized protein (3459 aa).

The span at 158–167 shows a compositional bias: acidic residues; sequence NDDDWIFNED. Disordered regions lie at residues 158–230 and 400–447; these read NDDD…NNNN and YGYI…NDEK. Residues 168-184 are compositionally biased toward basic and acidic residues; sequence DEKKNKNNDGNDNRYDY. Positions 185–201 are enriched in low complexity; that stretch reads NDLQNNNNNDNNKYDYN. The span at 204–221 shows a compositional bias: basic and acidic residues; that stretch reads DDEKKNKNNDGDDNKYDY. Residues 406 to 443 show a composition bias toward acidic residues; that stretch reads DNDDGDDYNDDNDNDDNYNDDNYNDDNYNDDNYNDDNY. Residues 771–851 adopt a coiled-coil conformation; it reads VNEKKKGENE…NEMNKDEENE (81 aa). Residues 1059–1079 form a helical membrane-spanning segment; that stretch reads LIYMIYLFFTYKKYDLLLMFI. 3 disordered regions span residues 1148–1187, 1399–1467, and 1711–1733; these read RRQE…NDYD, IPTQ…NDDD, and QKKK…NKEN. The segment covering 1404–1463 has biased composition (basic and acidic residues); sequence DKNETDEGNKNETDEGDKNETDEGDKNETDEGNKNETEEIYKNETDEGNKNETEEIYKND. 2 helical membrane-spanning segments follow: residues 2059 to 2079 and 2197 to 2217; these read FLLF…IFFF and IIQC…DFLF. Disordered stretches follow at residues 2582–2644 and 2776–2835; these read IYKD…DNNN and GRIW…DKGD. The segment covering 2592–2629 has biased composition (acidic residues); sequence DNNDDDNINDDDNINDDDNINDDDNNNDDDNNNDDNND. Over residues 2779-2821 the composition is skewed to basic and acidic residues; it reads WKREENGEKKKNEKNESEKNERNEKNEKNEKHEKHEKHEKNEK. Residues 2785 to 2820 are a coiled coil; the sequence is GEKKKNEKNESEKNERNEKNEKNEKHEKHEKHEKNE. 2 helical membrane-spanning segments follow: residues 3229–3249 and 3296–3316; these read LFII…SFIL and LLFF…NINS.

The protein localises to the membrane. This is an uncharacterized protein from Plasmodium falciparum (isolate 3D7).